The following is a 209-amino-acid chain: Large ribosomal subunit protein uL3 (209 aa).

Positions 141-163 are disordered; the sequence is RAVGSMGASSDPSRTFKNKRMPG.

It belongs to the universal ribosomal protein uL3 family. As to quaternary structure, part of the 50S ribosomal subunit. Forms a cluster with proteins L14 and L19.

One of the primary rRNA binding proteins, it binds directly near the 3'-end of the 23S rRNA, where it nucleates assembly of the 50S subunit. The polypeptide is Large ribosomal subunit protein uL3 (Clostridium botulinum (strain ATCC 19397 / Type A)).